Here is a 411-residue protein sequence, read N- to C-terminus: Flagellum-associated coiled-coil domain-containing protein 1 (411 aa).

Residues 52-77 (SQPAKSTAFPRDKAQSRKLEESNKAP) form a disordered region. Basic and acidic residues predominate over residues 61–74 (PRDKAQSRKLEESN). 2 coiled-coil regions span residues 124-220 (SDII…LKNM) and 278-328 (NESF…VVLE). An N6-acetyllysine modification is found at K353. The stretch at 355–385 (FQTKLAEAEEKYKSTIQVLTEENNSLRQKVL) forms a coiled coil.

The protein resides in the cytoplasm. It localises to the cytoplasmic granule. It is found in the cell projection. The protein localises to the cilium. Its subcellular location is the flagellum. This chain is Flagellum-associated coiled-coil domain-containing protein 1, found in Rattus norvegicus (Rat).